A 158-amino-acid chain; its full sequence is Transcription elongation factor GreA (158 aa).

This sequence belongs to the GreA/GreB family.

Functionally, necessary for efficient RNA polymerase transcription elongation past template-encoded arresting sites. The arresting sites in DNA have the property of trapping a certain fraction of elongating RNA polymerases that pass through, resulting in locked ternary complexes. Cleavage of the nascent transcript by cleavage factors such as GreA or GreB allows the resumption of elongation from the new 3'terminus. GreA releases sequences of 2 to 3 nucleotides. The polypeptide is Transcription elongation factor GreA (Pseudomonas syringae pv. tomato (strain ATCC BAA-871 / DC3000)).